A 32-amino-acid chain; its full sequence is Basic phospholipase A2 (32 aa).

3 residues coordinate Ca(2+): tyrosine 26, glycine 28, and glycine 30.

It belongs to the phospholipase A2 family. Group II subfamily. Ca(2+) serves as cofactor. In terms of tissue distribution, expressed by the venom gland.

The protein localises to the secreted. It carries out the reaction a 1,2-diacyl-sn-glycero-3-phosphocholine + H2O = a 1-acyl-sn-glycero-3-phosphocholine + a fatty acid + H(+). Snake venom phospholipase A2 (PLA2) that inhibits neuromuscular transmission by blocking acetylcholine release from the nerve termini. PLA2 catalyzes the calcium-dependent hydrolysis of the 2-acyl groups in 3-sn-phosphoglycerides. This chain is Basic phospholipase A2, found in Gloydius halys (Chinese water mocassin).